The following is a 457-amino-acid chain: Autophagy-related protein 14 (457 aa).

A coiled-coil region spans residues 31–109 (RIENVMALIE…TRRAALSRRK (79 aa)). Disordered regions lie at residues 54 to 73 (ETNAPTKDRKDALQAQQRTA), 252 to 274 (PSQASVSSPSSTTDTESQRVSRP), and 433 to 457 (NKNLLMGDKSSPRRGTSGWMRVKNR). The span at 253–266 (SQASVSSPSSTTDT) shows a compositional bias: low complexity.

It belongs to the ATG14 family. As to quaternary structure, component of the autophagy-specific VPS34 PI3-kinase complex I.

Its subcellular location is the preautophagosomal structure membrane. The protein resides in the vacuole membrane. Required for cytoplasm to vacuole transport (Cvt) and autophagy as a part of the autophagy-specific VPS34 PI3-kinase complex I. This complex is essential to recruit the ATG8-phosphatidylinositol conjugate and the ATG12-ATG5 conjugate to the pre-autophagosomal structure. ATG14 mediates the specific binding of the VPS34 PI3-kinase complex I to the preautophagosomal structure (PAS). Autophagy is required for proper vegetative growth, asexual/sexual reproduction, and full virulence. Autophagy is particularly involved in the biosynthesis of deoxynivalenol (DON), an important virulence determinant. This is Autophagy-related protein 14 from Gibberella zeae (strain ATCC MYA-4620 / CBS 123657 / FGSC 9075 / NRRL 31084 / PH-1) (Wheat head blight fungus).